A 747-amino-acid polypeptide reads, in one-letter code: 3',5'-cyclic-AMP phosphodiesterase 4D (747 aa).

A disordered region spans residues 1–28 (MERDTCDVLSRSKSASEETLHSCNEEED). The span at 14-24 (SASEETLHSCN) shows a compositional bias: basic and acidic residues. Residues Ser-238, Ser-240, Ser-287, and Ser-314 each carry the phosphoserine modification. The interval 282–302 (EVEIPSPTQKEKEKKKRPMSQ) is disordered. The PDEase domain occupies 325 to 654 (VKTEQEDVLA…EWYQSTIPQS (330 aa)). A Glycyl lysine isopeptide (Lys-Gly) (interchain with G-Cter in SUMO) cross-link involves residue Lys-326. His-401 serves as the catalytic Proton donor. Residue His-401 coordinates 3',5'-cyclic AMP. His-401 is an AMP binding site. Zn(2+)-binding residues include His-405, His-441, Asp-442, and Asp-559. Asp-442, Asp-559, Asn-562, Gln-610, and Phe-613 together coordinate AMP. A Mg(2+)-binding site is contributed by Asp-442. Asp-442 is a binding site for Mn(2+). Residues Gln-610 and Phe-613 each coordinate 3',5'-cyclic AMP. The interval 649 to 747 (STIPQSPSPA…CVPDDCCPDT (99 aa)) is disordered. Polar residues predominate over residues 701 to 712 (CSDSKTLCTQDS). Positions 718–734 (PLDEQVEEEAVAEEESQ) are enriched in acidic residues.

This sequence belongs to the cyclic nucleotide phosphodiesterase family. PDE4 subfamily. In terms of assembly, homodimer for the long isoforms. Isoforms with truncated N-termini are monomeric. Binds ARRB2. Interacts with PDE4DIP. Identified in a complex composed of RYR1, PDE4D, PKA, FKBP1A and protein phosphatase 1 (PP1). Interacts (via N-terminal region) with SHANK2 (via proline-rich region); the interaction is increased in a PKA-dependent manner. Requires Zn(2+) as cofactor. Mg(2+) serves as cofactor. The cofactor is Mn(2+). In terms of processing, sumoylation of long isoforms by PIAS4 augments their activation by PKA phosphorylation and represses their inhibition by ERK phosphorylation. Expressed in brain (at protein level). Isoform 7 is detected in heart, brain, lung, kidney and testis.

It localises to the cytoplasm. Its subcellular location is the membrane. The protein resides in the cytoskeleton. The protein localises to the microtubule organizing center. It is found in the centrosome. It localises to the apical cell membrane. The catalysed reaction is 3',5'-cyclic AMP + H2O = AMP + H(+). The protein operates within purine metabolism; 3',5'-cyclic AMP degradation; AMP from 3',5'-cyclic AMP: step 1/1. Its activity is regulated as follows. Inhibited by rolipram. Activated by phosphatidic acid. Its function is as follows. Hydrolyzes the second messenger cAMP, which is a key regulator of many important physiological processes. This Mus musculus (Mouse) protein is 3',5'-cyclic-AMP phosphodiesterase 4D (Pde4d).